Here is a 189-residue protein sequence, read N- to C-terminus: Histidinol-phosphate aminotransferase (189 aa).

It belongs to the class-II pyridoxal-phosphate-dependent aminotransferase family. Histidinol-phosphate aminotransferase subfamily. Homodimer. Requires pyridoxal 5'-phosphate as cofactor.

It catalyses the reaction L-histidinol phosphate + 2-oxoglutarate = 3-(imidazol-4-yl)-2-oxopropyl phosphate + L-glutamate. Its pathway is amino-acid biosynthesis; L-histidine biosynthesis; L-histidine from 5-phospho-alpha-D-ribose 1-diphosphate: step 7/9. The chain is Histidinol-phosphate aminotransferase (hisC) from Thiocapsa roseopersicina.